We begin with the raw amino-acid sequence, 409 residues long: Histidine--tRNA ligase (409 aa).

It belongs to the class-II aminoacyl-tRNA synthetase family.

The protein resides in the cytoplasm. The enzyme catalyses tRNA(His) + L-histidine + ATP = L-histidyl-tRNA(His) + AMP + diphosphate + H(+). This chain is Histidine--tRNA ligase, found in Methanosphaerula palustris (strain ATCC BAA-1556 / DSM 19958 / E1-9c).